We begin with the raw amino-acid sequence, 367 residues long: Heat-inducible transcription repressor HrcA (367 aa).

It belongs to the HrcA family.

Functionally, negative regulator of class I heat shock genes (grpE-dnaK-dnaJ and groELS operons). Prevents heat-shock induction of these operons. This chain is Heat-inducible transcription repressor HrcA, found in Acaryochloris marina (strain MBIC 11017).